A 575-amino-acid chain; its full sequence is Interleukin-10 receptor subunit alpha (575 aa).

An N-terminal signal peptide occupies residues 1–16 (MLSRLLPFLVTISSLS). Residues 17–241 (LEFIAYGTEL…QYFTVTNLSI (225 aa)) are Extracellular-facing. N50, N66, N113, and N182 each carry an N-linked (GlcNAc...) asparagine glycan. A disulfide bridge links C204 with C225. N238 is a glycosylation site (N-linked (GlcNAc...) asparagine). The chain crosses the membrane as a helical span at residues 242–262 (LVISMLLFCGILVCLVLQWYI). Topologically, residues 263 to 575 (RHPGKLPTVL…PLISSLQVEE (313 aa)) are cytoplasmic. Residues Y443 and Y493 each carry the phosphotyrosine modification.

This sequence belongs to the type II cytokine receptor family. As to quaternary structure, interacts with IL10. Interacts with IL10RB. Interacts (via its cytoplasmic domain) with JAK1 (via N-terminus). Interacts with BTRC; this interaction leads to IL10RA ubiquitination and subsequent degradation. Interacts with STAT3. Phosphorylated. Phosphorylation of the cytoplasmic tail induced STAT3 activation. Post-translationally, ubiquitinated by BTRC; ubiquitination leads to endocytosis and subsequent degradation of IL10RA.

The protein localises to the cell membrane. It localises to the cytoplasm. Its function is as follows. Cell surface receptor for the cytokine IL10 that participates in IL10-mediated anti-inflammatory functions, limiting excessive tissue disruption caused by inflammation. Upon binding to IL10, induces a conformational change in IL10RB, allowing IL10RB to bind IL10 as well. In turn, the heterotetrameric assembly complex, composed of two subunits of IL10RA and IL10RB, activates the kinases JAK1 and TYK2 that are constitutively associated with IL10RA and IL10RB respectively. These kinases then phosphorylate specific tyrosine residues in the intracellular domain in IL10RA leading to the recruitment and subsequent phosphorylation of STAT3. Once phosphorylated, STAT3 homodimerizes, translocates to the nucleus and activates the expression of anti-inflammatory genes. In addition, IL10RA-mediated activation of STAT3 inhibits starvation-induced autophagy. The sequence is that of Interleukin-10 receptor subunit alpha (Il10ra) from Mus musculus (Mouse).